The sequence spans 269 residues: 5'-nucleotidase SurE (269 aa).

The a divalent metal cation site is built by aspartate 11, aspartate 12, serine 43, and asparagine 101.

Belongs to the SurE nucleotidase family. The cofactor is a divalent metal cation.

The protein resides in the cytoplasm. The enzyme catalyses a ribonucleoside 5'-phosphate + H2O = a ribonucleoside + phosphate. In terms of biological role, nucleotidase that shows phosphatase activity on nucleoside 5'-monophosphates. The sequence is that of 5'-nucleotidase SurE from Synechococcus sp. (strain CC9902).